A 434-amino-acid polypeptide reads, in one-letter code: 3-phosphoshikimate 1-carboxyvinyltransferase (434 aa).

The 3-phosphoshikimate site is built by Lys22, Ser23, and Arg27. A phosphoenolpyruvate-binding site is contributed by Lys22. Gly93 and Arg121 together coordinate phosphoenolpyruvate. 6 residues coordinate 3-phosphoshikimate: Ser168, Ser169, Gln170, Ser199, Asp320, and Lys347. A phosphoenolpyruvate-binding site is contributed by Gln170. Asp320 functions as the Proton acceptor in the catalytic mechanism. Residues Arg351, Arg394, and Lys419 each coordinate phosphoenolpyruvate.

It belongs to the EPSP synthase family. Monomer.

It is found in the cytoplasm. The enzyme catalyses 3-phosphoshikimate + phosphoenolpyruvate = 5-O-(1-carboxyvinyl)-3-phosphoshikimate + phosphate. It functions in the pathway metabolic intermediate biosynthesis; chorismate biosynthesis; chorismate from D-erythrose 4-phosphate and phosphoenolpyruvate: step 6/7. Functionally, catalyzes the transfer of the enolpyruvyl moiety of phosphoenolpyruvate (PEP) to the 5-hydroxyl of shikimate-3-phosphate (S3P) to produce enolpyruvyl shikimate-3-phosphate and inorganic phosphate. The protein is 3-phosphoshikimate 1-carboxyvinyltransferase of Paraburkholderia phymatum (strain DSM 17167 / CIP 108236 / LMG 21445 / STM815) (Burkholderia phymatum).